A 22-amino-acid chain; its full sequence is Pectinesterase (22 aa).

Asp-6 functions as the Proton donor in the catalytic mechanism. Substrate is bound by residues Arg-19 and Trp-21.

Belongs to the pectinesterase family.

The protein localises to the secreted. Its subcellular location is the cell wall. The enzyme catalyses [(1-&gt;4)-alpha-D-galacturonosyl methyl ester](n) + n H2O = [(1-&gt;4)-alpha-D-galacturonosyl](n) + n methanol + n H(+). The protein operates within glycan metabolism; pectin degradation; 2-dehydro-3-deoxy-D-gluconate from pectin: step 1/5. This Capsicum chinense (Scotch bonnet) protein is Pectinesterase.